The following is a 199-amino-acid chain: Recombination protein RecR (199 aa).

The C4-type zinc finger occupies 56–71; that stretch reads CQQCNNYTEQTLCALC. Positions 79–174 constitute a Toprim domain; it reads TLLCVVESPA…NISQLAHGIP (96 aa).

The protein belongs to the RecR family.

Functionally, may play a role in DNA repair. It seems to be involved in an RecBC-independent recombinational process of DNA repair. It may act with RecF and RecO. This chain is Recombination protein RecR, found in Legionella pneumophila subsp. pneumophila (strain Philadelphia 1 / ATCC 33152 / DSM 7513).